A 442-amino-acid polypeptide reads, in one-letter code: MSITTTMTSVPIFESVSRFLPPGNEDEQFWWKITGRHMARMMHEAGYPEDRQVECLLFHRFKVVPCLGPRPHSDTPWYKSRVGGGAADGCPINYSWRFGTSDRRPHNRNFIEPLGALTNTSADPLNEVATKALLHDYSMTLPNVDLEAFWTFAPHYRPRIIEKADMEKLAGASLLVGAEMSPDSRTIDIKAYMYPRVPSQTSQLLTTILPQAMRDAYGEDVCLDSLNFVHDFMTKDPQGCQLVLTGTTGIDCCKLQDTRVKIYVITRNTSFDHIAAIMTLGGRRPISEELLGQLKALWYELKGAPAELPSSEQLPVQTKPDRSKNPIVVPFYFDIQPRLELPDVKAYIDVSTSPVSDLAAANAVVCHLEQHGSGQNPKAYLNVLKDITPVEALETQKGALAFYSVAVKKNELDITSYFNPQVYKRYFAHEVQLNGQRRSVFE.

This sequence belongs to the tryptophan dimethylallyltransferase family.

It participates in secondary metabolite biosynthesis. Functionally, prenyltransferase; part of the gene cluster that mediates the biosynthesis of neosartoricin B, a prenylated anthracenone that probably exhibits T-cell antiproliferative activity, suggestive of a physiological role as an immunosuppressive agent. The non-reducing polyketide synthase nscA probably synthesizes and cyclizes the decaketide backbone. The hydrolase nscB then mediates the product release through hydrolysis followed by spontaneous decarboxylation. The prenyltransferase nscD catalyzes the addition of the dimethylallyl group to the aromatic C5. The FAD-dependent monooxygenase nscC is then responsible for the stereospecific hydroxylation at C2. Neosartoricin B can be converted into two additional compounds neosartoricins C and D. Neosartoricin C is a spirocyclic compound that is cyclized through the attack of C3 hydroxyl on C14, followed by dehydration. On the other hand, neosartoricin D is a further cyclized compound in which attack of C2 on C14 in neosartoricin C results in the formation of the acetal-containing dioxabicyclo-octanone ring. Both of these compounds are novel and possibly represent related metabolites of the gene cluster. The sequence is that of Prenyltransferase nscD from Trichophyton verrucosum (strain HKI 0517).